Reading from the N-terminus, the 99-residue chain is Signal recognition particle 19 kDa protein (99 aa).

Belongs to the SRP19 family. In terms of assembly, part of the signal recognition particle protein translocation system, which is composed of SRP and FtsY. Archaeal SRP consists of a 7S RNA molecule of 300 nucleotides and two protein subunits: SRP54 and SRP19.

The protein resides in the cytoplasm. Its function is as follows. Involved in targeting and insertion of nascent membrane proteins into the cytoplasmic membrane. Binds directly to 7S RNA and mediates binding of the 54 kDa subunit of the SRP. The protein is Signal recognition particle 19 kDa protein of Pyrococcus horikoshii (strain ATCC 700860 / DSM 12428 / JCM 9974 / NBRC 100139 / OT-3).